The following is a 455-amino-acid chain: Protein 60A (455 aa).

Residues 1 to 36 (MSGLRNTSEAVAVLASLGLGMVLLMFVATTPPAVEA) form the signal peptide. A propeptide spanning residues 37–335 (TQSGIYIDNG…SASHPRKRKK (299 aa)) is cleaved from the precursor. Residues 108 to 118 (GLSDQDEDDDY) show a composition bias toward acidic residues. The segment at 108 to 138 (GLSDQDEDDDYERGHRSRRSADLEEDEGEQQ) is disordered. Residues Asn238 and Asn250 are each glycosylated (N-linked (GlcNAc...) asparagine). Positions 316-345 (AHSSHHRSKRSASHPRKRKKSVSPNNVPLL) are disordered. A compositionally biased stretch (basic residues) spans 318-336 (SSHHRSKRSASHPRKRKKS). Disulfide bonds link Cys354–Cys420, Cys383–Cys452, and Cys387–Cys454. N-linked (GlcNAc...) asparagine glycosylation occurs at Asn396.

This sequence belongs to the TGF-beta family. As to quaternary structure, homodimer; disulfide-linked. Interacts with nord and dpp. In terms of tissue distribution, expressed in cells of the developing foregut and hindgut during germ band retraction and later embryonic stages. Expressed in the wing disk, mainly in the posterior compartment in the pteropleural and medial regions extending into the progenitors of the scutellum. High levels are found within the posterior and anterior compartments of the wing pouch and low levels in the hinge region. In the eye/antennal disk, expression is highest anterior to the morphogenetic furrow and in the medial regions with lower levels of expression posterior to the morphogenetic furrow. Expressed throughout the posterior compartment of the leg imaginal disks and within the ventral anterior compartment.

The protein resides in the secreted. Functionally, required for the growth of imaginal tissues and for patterning of the adult wing. The polypeptide is Protein 60A (gbb) (Drosophila melanogaster (Fruit fly)).